The sequence spans 388 residues: Chorismate synthase (388 aa).

NADP(+) contacts are provided by R39 and R45. Residues 130–132 (RSS), 251–252 (NA), G296, 311–315 (KPIPT), and R337 contribute to the FMN site.

Belongs to the chorismate synthase family. In terms of assembly, homotetramer. The cofactor is FMNH2.

It catalyses the reaction 5-O-(1-carboxyvinyl)-3-phosphoshikimate = chorismate + phosphate. It functions in the pathway metabolic intermediate biosynthesis; chorismate biosynthesis; chorismate from D-erythrose 4-phosphate and phosphoenolpyruvate: step 7/7. Catalyzes the anti-1,4-elimination of the C-3 phosphate and the C-6 proR hydrogen from 5-enolpyruvylshikimate-3-phosphate (EPSP) to yield chorismate, which is the branch point compound that serves as the starting substrate for the three terminal pathways of aromatic amino acid biosynthesis. This reaction introduces a second double bond into the aromatic ring system. The polypeptide is Chorismate synthase (Streptococcus pneumoniae serotype 2 (strain D39 / NCTC 7466)).